The following is a 179-amino-acid chain: ATP synthase subunit delta 1 (179 aa).

It belongs to the ATPase delta chain family. As to quaternary structure, F-type ATPases have 2 components, F(1) - the catalytic core - and F(0) - the membrane proton channel. F(1) has five subunits: alpha(3), beta(3), gamma(1), delta(1), epsilon(1). F(0) has three main subunits: a(1), b(2) and c(10-14). The alpha and beta chains form an alternating ring which encloses part of the gamma chain. F(1) is attached to F(0) by a central stalk formed by the gamma and epsilon chains, while a peripheral stalk is formed by the delta and b chains.

Its subcellular location is the cell inner membrane. F(1)F(0) ATP synthase produces ATP from ADP in the presence of a proton or sodium gradient. F-type ATPases consist of two structural domains, F(1) containing the extramembraneous catalytic core and F(0) containing the membrane proton channel, linked together by a central stalk and a peripheral stalk. During catalysis, ATP synthesis in the catalytic domain of F(1) is coupled via a rotary mechanism of the central stalk subunits to proton translocation. In terms of biological role, this protein is part of the stalk that links CF(0) to CF(1). It either transmits conformational changes from CF(0) to CF(1) or is implicated in proton conduction. This Syntrophotalea carbinolica (strain DSM 2380 / NBRC 103641 / GraBd1) (Pelobacter carbinolicus) protein is ATP synthase subunit delta 1.